The sequence spans 354 residues: Muscleblind-like protein 3 (354 aa).

4 C3H1-type zinc fingers span residues 14–42 (WLTL…HPPR), 48–74 (NGRV…HPPP), 174–202 (SDKL…HPTD), and 210–236 (DNTV…HPPA).

This sequence belongs to the muscleblind family. In terms of tissue distribution, highly expressed in the placenta.

It localises to the nucleus. The protein localises to the cytoplasm. In terms of biological role, mediates pre-mRNA alternative splicing regulation. Acts either as activator or repressor of splicing on specific pre-mRNA targets. Inhibits cardiac troponin-T (TNNT2) pre-mRNA exon inclusion but induces insulin receptor (IR) pre-mRNA exon inclusion in muscle. Antagonizes the alternative splicing activity pattern of CELF proteins. May play a role in myotonic dystrophy pathophysiology (DM). Could inhibit terminal muscle differentiation, acting at approximately the time of myogenin induction. This chain is Muscleblind-like protein 3 (MBNL3), found in Homo sapiens (Human).